Here is a 36-residue protein sequence, read N- to C-terminus: Esculentin-2R (36 aa).

Cysteines 30 and 36 form a disulfide.

As to expression, expressed by the skin glands.

It is found in the secreted. In terms of biological role, antimicrobial peptide. The polypeptide is Esculentin-2R (Pelophylax ridibundus (Marsh frog)).